A 374-amino-acid chain; its full sequence is MSGEGDTTLKAICYKPGSLQLLDQRKLPLETIYLEIRDASDGWSAIQEMVVRGAPAIAIAAALSLAVEVFNFHGFDGSASDAVAFLENKLDYLVSSRPTAVNLADAALKLKHVIAKALATATEAKSIFKAYIEASEDMLEDDVVSNKAIGNFGLSLLRQQAKNPDKLSVLTHCNTGSLATAGYGTALGVIRALHTQGILERAYCTETRPFNQGSRLTAFELVHEKIPATLIADSAAAALMKDGRVDGVIVGADRVASNGDTANKIGTYSLALCAKHHGIPFYVAAPLTSVDLSLSSGKEIVIEERSPKELMHTHGGLGERIAAPGISVWNPAFDMTPAELIAGIITEKGVITKNGNDTFDISSFAKKITGNSSR.

Serine 2 bears the N-acetylserine mark. Aspartate 253 functions as the Proton donor in the catalytic mechanism.

The protein belongs to the eIF-2B alpha/beta/delta subunits family. MtnA subfamily.

It is found in the cytoplasm. Its subcellular location is the nucleus. The enzyme catalyses 5-(methylsulfanyl)-alpha-D-ribose 1-phosphate = 5-(methylsulfanyl)-D-ribulose 1-phosphate. Its pathway is amino-acid biosynthesis; L-methionine biosynthesis via salvage pathway; L-methionine from S-methyl-5-thio-alpha-D-ribose 1-phosphate: step 1/6. Its function is as follows. Catalyzes the interconversion of methylthioribose-1-phosphate (MTR-1-P) into methylthioribulose-1-phosphate (MTRu-1-P). The polypeptide is Methylthioribose-1-phosphate isomerase (Arabidopsis thaliana (Mouse-ear cress)).